The chain runs to 602 residues: UvrABC system protein C (602 aa).

One can recognise a GIY-YIG domain in the interval 17–94 (KTSGCYKMYS…IKKYKPTYNI (78 aa)). In terms of domain architecture, UVR spans 199–234 (SKLLNDIEIKMKEVIMKENFEAAIKLKETKKSLIEI).

This sequence belongs to the UvrC family. In terms of assembly, interacts with UvrB in an incision complex.

Its subcellular location is the cytoplasm. In terms of biological role, the UvrABC repair system catalyzes the recognition and processing of DNA lesions. UvrC both incises the 5' and 3' sides of the lesion. The N-terminal half is responsible for the 3' incision and the C-terminal half is responsible for the 5' incision. The polypeptide is UvrABC system protein C (Borrelia recurrentis (strain A1)).